We begin with the raw amino-acid sequence, 461 residues long: MPREIITCQVGQCGNQIGMEFWKQLCMEHGINPEGILEDFAVNGEDRKDVFFYQADDEHYVPRAVLIDLEPRVINGIQKSAYSSLYNPENIYIAKHGGGAGNNWGRGYTDAEKVQDEILEMIDREADGSDSLEGFVLTHSIAGGTGSGFGSYLLERLNDHYPKKLIQTYSVFPIENDVVVQPYNCLLSIKRLTLNADCVVVLDNNALTSIAVDRLKILQPTFSQINSIVSTVMAASTTTLRYPGYMNNDMVGLIASLVPTPRCHFLMTGYTPLSLDQKFNSVRKTTVLDVMRRLLQTKNIMVTGAVKKGAYMSILNVIQGDVDPTQVHKSLQRIRERKLANFIPWGPASIQVALSKKSPYIDSGHKVSGLMLANHTGIRSIFKVLYDQYRTFRKRDAYMNIFKQTKIFEDNLDEFDSSDEVVKSLIDEYAAAEKMDYINWGNDDDDMQFDPREPPKFSNIQ.

142–148 contributes to the GTP binding site; that stretch reads AGGTGSG.

This sequence belongs to the tubulin family.

The protein localises to the cytoplasm. It is found in the cytoskeleton. Its subcellular location is the microtubule organizing center. The protein resides in the centrosome. Tubulin is the major constituent of microtubules. The gamma chain is found at microtubule organizing centers (MTOC) such as the spindle poles or the centrosome, suggesting that it is involved in the minus-end nucleation of microtubule assembly. This is Tubulin gamma-1 chain from Euplotoides octocarinatus (Freshwater ciliate).